The primary structure comprises 66 residues: Large ribosomal subunit protein bL33 (66 aa).

The protein belongs to the bacterial ribosomal protein bL33 family.

This chain is Large ribosomal subunit protein bL33, found in Wolbachia sp. subsp. Brugia malayi (strain TRS).